The following is a 539-amino-acid chain: Kynureninase 2 (539 aa).

A disordered region spans residues 60–87; it reads DGGVAGETKEPRVPNGVSSATKPNGTVN. The span at 75-87 shows a compositional bias: polar residues; the sequence is GVSSATKPNGTVN. Residues Leu-171, Thr-172, 199 to 202, Asp-290, His-293, and Tyr-315 each bind pyridoxal 5'-phosphate; that span reads FPSD. Lys-316 carries the post-translational modification N6-(pyridoxal phosphate)lysine. Over residues 340 to 352 the composition is skewed to gly residues; it reads GGGGSGGVGGGRG. The interval 340–363 is disordered; sequence GGGGSGGVGGGRGEGGDGDGGDGG. Residues Trp-379 and Asn-407 each contribute to the pyridoxal 5'-phosphate site.

The protein belongs to the kynureninase family. Homodimer. Pyridoxal 5'-phosphate is required as a cofactor.

Its subcellular location is the cytoplasm. It carries out the reaction L-kynurenine + H2O = anthranilate + L-alanine + H(+). It catalyses the reaction 3-hydroxy-L-kynurenine + H2O = 3-hydroxyanthranilate + L-alanine + H(+). The protein operates within amino-acid degradation; L-kynurenine degradation; L-alanine and anthranilate from L-kynurenine: step 1/1. It functions in the pathway cofactor biosynthesis; NAD(+) biosynthesis; quinolinate from L-kynurenine: step 2/3. Functionally, catalyzes the cleavage of L-kynurenine (L-Kyn) and L-3-hydroxykynurenine (L-3OHKyn) into anthranilic acid (AA) and 3-hydroxyanthranilic acid (3-OHAA), respectively. The chain is Kynureninase 2 from Chaetomium globosum (strain ATCC 6205 / CBS 148.51 / DSM 1962 / NBRC 6347 / NRRL 1970) (Soil fungus).